Consider the following 339-residue polypeptide: Ribosomal RNA small subunit methyltransferase C (339 aa).

The protein belongs to the methyltransferase superfamily. RsmC family. In terms of assembly, monomer.

The protein resides in the cytoplasm. It carries out the reaction guanosine(1207) in 16S rRNA + S-adenosyl-L-methionine = N(2)-methylguanosine(1207) in 16S rRNA + S-adenosyl-L-homocysteine + H(+). Its function is as follows. Specifically methylates the guanine in position 1207 of 16S rRNA in the 30S particle. The sequence is that of Ribosomal RNA small subunit methyltransferase C from Aliivibrio fischeri (strain MJ11) (Vibrio fischeri).